The sequence spans 342 residues: Protein-glutamate methylesterase/protein-glutamine glutaminase 4 (342 aa).

The Response regulatory domain occupies 2–119; that stretch reads NIGIVNDLPL…GGSADPSQPL (118 aa). Asp-53 bears the 4-aspartylphosphate mark. One can recognise a CheB-type methylesterase domain in the interval 144–337; the sequence is PAPQGALPPL…DQLISLVQRN (194 aa). Residues Ser-159, His-186, and Asp-279 contribute to the active site.

The protein belongs to the CheB family. In terms of processing, phosphorylated by CheA. Phosphorylation of the N-terminal regulatory domain activates the methylesterase activity.

The protein resides in the cytoplasm. The enzyme catalyses [protein]-L-glutamate 5-O-methyl ester + H2O = L-glutamyl-[protein] + methanol + H(+). It catalyses the reaction L-glutaminyl-[protein] + H2O = L-glutamyl-[protein] + NH4(+). Functionally, involved in chemotaxis. Part of a chemotaxis signal transduction system that modulates chemotaxis in response to various stimuli. Catalyzes the demethylation of specific methylglutamate residues introduced into the chemoreceptors (methyl-accepting chemotaxis proteins or MCP) by CheR. Also mediates the irreversible deamidation of specific glutamine residues to glutamic acid. The chain is Protein-glutamate methylesterase/protein-glutamine glutaminase 4 from Burkholderia thailandensis (strain ATCC 700388 / DSM 13276 / CCUG 48851 / CIP 106301 / E264).